Reading from the N-terminus, the 252-residue chain is MFQPAPKRCFTIESLVAKDSPLPASRSEDPIRPAALSYANSSPINPFLNGFHSAAAAAAGRGVYSNPDLVFAEAVSHPPNPAVPVHPVPPPHALAAHPLPSSHSPHPLFASQQRDPSTFYPWLIHRYRYLGHRFQGNDTSPESFLLHNALARKPKRIRTAFSPSQLLRLEHAFEKNHYVVGAERKQLAHSLSLTETQVKVWFQNRRTKFKRQKLEEEGSDSQQKKKGTHHINRWRIATKQASPEEIDVTSDD.

A DNA-binding region (homeobox) is located at residues 154–213; the sequence is PKRIRTAFSPSQLLRLEHAFEKNHYVVGAERKQLAHSLSLTETQVKVWFQNRRTKFKRQK. A disordered region spans residues 212–252; the sequence is QKLEEEGSDSQQKKKGTHHINRWRIATKQASPEEIDVTSDD. A compositionally biased stretch (basic residues) spans 224–233; that stretch reads KKKGTHHINR.

It belongs to the EMX homeobox family. As to quaternary structure, interacts with translation initiation factor EIF4E. As to expression, cerebral cortex.

Its subcellular location is the nucleus. It localises to the cell projection. The protein resides in the axon. Functionally, transcription factor, which in cooperation with EMX1, acts to generate the boundary between the roof and archipallium in the developing brain. May function in combination with OTX1/2 to specify cell fates in the developing central nervous system. In the inner ear, it controls the distribution of GPR156 at hair cell boundaries, and regulates the organization of stereociliary bundles in opposite orientations across the line of polarity reversal (LPR). This is Homeobox protein EMX2 (EMX2) from Homo sapiens (Human).